The sequence spans 248 residues: Probable transcriptional regulatory protein Mnod_7401 (248 aa).

Belongs to the TACO1 family.

It localises to the cytoplasm. This is Probable transcriptional regulatory protein Mnod_7401 from Methylobacterium nodulans (strain LMG 21967 / CNCM I-2342 / ORS 2060).